The sequence spans 212 residues: Large ribosomal subunit protein uL3 (212 aa).

The residue at position 153 (Gln-153) is an N5-methylglutamine.

Belongs to the universal ribosomal protein uL3 family. As to quaternary structure, part of the 50S ribosomal subunit. Forms a cluster with proteins L14 and L19. Methylated by PrmB.

In terms of biological role, one of the primary rRNA binding proteins, it binds directly near the 3'-end of the 23S rRNA, where it nucleates assembly of the 50S subunit. This Shewanella denitrificans (strain OS217 / ATCC BAA-1090 / DSM 15013) protein is Large ribosomal subunit protein uL3.